The chain runs to 359 residues: Protein mab-21-like 2 (359 aa).

Belongs to the mab-21 family.

The protein resides in the nucleus. Its subcellular location is the cytoplasm. Functionally, required for several aspects of embryonic development including normal development of the eye. The protein is Protein mab-21-like 2 (mab21l2) of Xenopus tropicalis (Western clawed frog).